The following is a 257-amino-acid chain: Undecaprenyl-diphosphatase (257 aa).

The next 8 membrane-spanning stretches (helical) occupy residues 4–24, 41–61, 74–94, 103–123, 133–153, 173–193, 209–229, and 236–256; these read LIRVVILAIVQGIAEFLPISS, SVTLEIILHAGTLGSILVVFW, VIGLLVIGTLPAVVIGLTIKT, PLLAGAMLIVTGVMLIVLGRL, LGLGAAFLVGCFQAFAILPGI, SVTFSFLLAIPAILGATVLAI, VLSIGAAVAFAVGIVALKWLI, and RLHWFAYWCIPAGLLVVLLNL.

This sequence belongs to the UppP family.

The protein localises to the cell inner membrane. It catalyses the reaction di-trans,octa-cis-undecaprenyl diphosphate + H2O = di-trans,octa-cis-undecaprenyl phosphate + phosphate + H(+). Functionally, catalyzes the dephosphorylation of undecaprenyl diphosphate (UPP). Confers resistance to bacitracin. This Rhodopirellula baltica (strain DSM 10527 / NCIMB 13988 / SH1) protein is Undecaprenyl-diphosphatase.